A 118-amino-acid chain; its full sequence is UPF0342 protein BCG9842_B4422 (118 aa).

It belongs to the UPF0342 family.

The polypeptide is UPF0342 protein BCG9842_B4422 (Bacillus cereus (strain G9842)).